The sequence spans 339 residues: Methionine import ATP-binding protein MetN 2 (339 aa).

The ABC transporter domain occupies 2 to 241; sequence ISFNNVSKVY…PKTTTTQNFV (240 aa). ATP is bound at residue 38–45; that stretch reads GFSGAGKS.

The protein belongs to the ABC transporter superfamily. Methionine importer (TC 3.A.1.24) family. As to quaternary structure, the complex is composed of two ATP-binding proteins (MetN), two transmembrane proteins (MetI) and a solute-binding protein (MetQ).

Its subcellular location is the cell membrane. It catalyses the reaction L-methionine(out) + ATP + H2O = L-methionine(in) + ADP + phosphate + H(+). The enzyme catalyses D-methionine(out) + ATP + H2O = D-methionine(in) + ADP + phosphate + H(+). Its function is as follows. Part of the ABC transporter complex MetNIQ involved in methionine import. Responsible for energy coupling to the transport system. This is Methionine import ATP-binding protein MetN 2 from Bacillus anthracis.